The following is a 946-amino-acid chain: MSDYKHTLNLPETDFPMRGMLPKREPGRVSQWQDMNLYQRLRDARAGREVFVLHDGPPYANGSIHIGHAVNKILKDIVVKSKSLAGYDAPYVPGWDCHGLPIEHKVETTHGKHLEADEARGLCREYAGAQIEGQKTDFVRLGVVGDWENPYRTMDFANEAGEIRALAKMVEGGYVFKGLKPVNWCFDCGSALAEAEVEYADKKSDAIDVAFAAAEPEALASAFGLASLDKPAAIVIWTTTPWTIPANQALNVHPDFTYALVDTGELLLVLAEELVESCLTRYGLEGDVVATAAGASLEFITFRHPFYERVAPVYLADYVTVEEGSTGIVHSAPSYGLDDFMTCREHGMSFDDMLNPVQGNGVYRDDLPLFGGQMIWKANPHIVDTLREVNALMAHTPITHSYMHCWRHKTPVIYRATAQWFVGMDREDDQGRTLRQRALDGVEATQFIPAWGKARLHSMIANRPDWCISRQRNWGVPIPFFMHKQTGEWHPRTVELMEDVARRVEAEGIDAWFRLDARELLGDEADQYDKVTDTLDVWFDSGTTHRHVMRGSHPMGHDQGPRADLYLEGSDQHRGWFHSSLLTGCAIDGHAPYKALLTHGFTVDEKGRKMSKSMGNVIAPQQVMDKLGADILRLWVASTDYSGEMAVSDEILKRTADVYRRIRNTSRFLLANLNGFAPERDAVAFEDMLALDQWVVDRAAQLQARIQGAYAEYRFRDVYQQVHDFCAHELGGFYLDVIKDRQYTTQADSRSRRSCQTALYHVVEALVRWVAPILSFTAEEIYEVIPGTRGDSVLLEEYYPHLATLEANAAMGREFWSRVLTVKQAVNKCLEDARNAKVVRNSLAAEVTLYADDSLRETLTQLGEELRFVLLTSEVHLASLEDAGSAQAEASELEGLKVAVVSSPHAKCERCWHHRADVGTHAADPNLCGRCLSNLPEGPGETRRYA.

Positions 58-68 (PYANGSIHIGH) match the 'HIGH' region motif. Glu-568 contacts L-isoleucyl-5'-AMP. Positions 609 to 613 (KMSKS) match the 'KMSKS' region motif. Lys-612 serves as a coordination point for ATP. Cys-908, Cys-911, Cys-928, and Cys-931 together coordinate Zn(2+).

Belongs to the class-I aminoacyl-tRNA synthetase family. IleS type 1 subfamily. As to quaternary structure, monomer. Zn(2+) serves as cofactor.

The protein localises to the cytoplasm. The catalysed reaction is tRNA(Ile) + L-isoleucine + ATP = L-isoleucyl-tRNA(Ile) + AMP + diphosphate. Functionally, catalyzes the attachment of isoleucine to tRNA(Ile). As IleRS can inadvertently accommodate and process structurally similar amino acids such as valine, to avoid such errors it has two additional distinct tRNA(Ile)-dependent editing activities. One activity is designated as 'pretransfer' editing and involves the hydrolysis of activated Val-AMP. The other activity is designated 'posttransfer' editing and involves deacylation of mischarged Val-tRNA(Ile). The sequence is that of Isoleucine--tRNA ligase from Chromohalobacter salexigens (strain ATCC BAA-138 / DSM 3043 / CIP 106854 / NCIMB 13768 / 1H11).